Reading from the N-terminus, the 772-residue chain is Cadherin-19 (772 aa).

The signal sequence occupies residues 1-21 (MNCYLLLRFMLGIPLLWPCLG). The propeptide occupies 22 to 43 (ATENSQTKKVKQPVRSHLRVKR). Cadherin domains lie at 44–148 (GWVW…EPKF), 149–256 (LDEP…KPIF), 257–370 (KESL…PPLF), 371–470 (LLPY…APEF), and 470–581 (FSQY…STQT). Residues 44-596 (GWVWNQFFVP…LVLSMGFKTE (553 aa)) are Extracellular-facing. Residues asparagine 57 and asparagine 74 are each glycosylated (N-linked (GlcNAc...) asparagine). Asparagine 419, asparagine 437, asparagine 508, asparagine 515, asparagine 516, and asparagine 534 each carry an N-linked (GlcNAc...) asparagine glycan. The chain crosses the membrane as a helical span at residues 597–617 (VIIAILICIMIIFGFIFLTLG). Residues 618–772 (LKQRRKQILF…MFGSAVQSNN (155 aa)) are Cytoplasmic-facing.

As to expression, expressed in many tissues, with the exception of uterus.

It localises to the cell membrane. Functionally, cadherins are calcium-dependent cell adhesion proteins. They preferentially interact with themselves in a homophilic manner in connecting cells; cadherins may thus contribute to the sorting of heterogeneous cell types. The chain is Cadherin-19 (CDH19) from Homo sapiens (Human).